Reading from the N-terminus, the 240-residue chain is Large ribosomal subunit protein uL1 (240 aa).

It belongs to the universal ribosomal protein uL1 family. As to quaternary structure, part of the 50S ribosomal subunit.

Its function is as follows. Binds directly to 23S rRNA. The L1 stalk is quite mobile in the ribosome, and is involved in E site tRNA release. In terms of biological role, protein L1 is also a translational repressor protein, it controls the translation of the L11 operon by binding to its mRNA. This chain is Large ribosomal subunit protein uL1, found in Streptomyces griseus subsp. griseus (strain JCM 4626 / CBS 651.72 / NBRC 13350 / KCC S-0626 / ISP 5235).